The chain runs to 212 residues: Uridine kinase (212 aa).

ATP is bound at residue 13–20 (GASASGKS).

Belongs to the uridine kinase family.

It is found in the cytoplasm. It carries out the reaction uridine + ATP = UMP + ADP + H(+). It catalyses the reaction cytidine + ATP = CMP + ADP + H(+). It participates in pyrimidine metabolism; CTP biosynthesis via salvage pathway; CTP from cytidine: step 1/3. Its pathway is pyrimidine metabolism; UMP biosynthesis via salvage pathway; UMP from uridine: step 1/1. This is Uridine kinase from Psychromonas ingrahamii (strain DSM 17664 / CCUG 51855 / 37).